The primary structure comprises 400 residues: Argininosuccinate synthase (400 aa).

ATP-binding positions include 10–18 (AYSGGVDTS) and A38. An L-citrulline-binding site is contributed by Y89. ATP is bound at residue G119. The L-aspartate site is built by T121, N125, and D126. N125 provides a ligand contact to L-citrulline. L-citrulline contacts are provided by R129, S177, S186, E262, and Y274.

This sequence belongs to the argininosuccinate synthase family. Type 1 subfamily. Homotetramer.

It localises to the cytoplasm. It catalyses the reaction L-citrulline + L-aspartate + ATP = 2-(N(omega)-L-arginino)succinate + AMP + diphosphate + H(+). The protein operates within amino-acid biosynthesis; L-arginine biosynthesis; L-arginine from L-ornithine and carbamoyl phosphate: step 2/3. The chain is Argininosuccinate synthase from Synechococcus elongatus (strain ATCC 33912 / PCC 7942 / FACHB-805) (Anacystis nidulans R2).